The sequence spans 124 residues: Small ribosomal subunit protein uS12 (124 aa).

The span at G11–K20 shows a compositional bias: basic residues. The segment at G11 to K30 is disordered. D89 carries the post-translational modification 3-methylthioaspartic acid. The interval E105–K124 is disordered. A compositionally biased stretch (basic residues) spans R111–K124.

Belongs to the universal ribosomal protein uS12 family. In terms of assembly, part of the 30S ribosomal subunit. Contacts proteins S8 and S17. May interact with IF1 in the 30S initiation complex.

With S4 and S5 plays an important role in translational accuracy. Its function is as follows. Interacts with and stabilizes bases of the 16S rRNA that are involved in tRNA selection in the A site and with the mRNA backbone. Located at the interface of the 30S and 50S subunits, it traverses the body of the 30S subunit contacting proteins on the other side and probably holding the rRNA structure together. The combined cluster of proteins S8, S12 and S17 appears to hold together the shoulder and platform of the 30S subunit. The chain is Small ribosomal subunit protein uS12 from Kosmotoga olearia (strain ATCC BAA-1733 / DSM 21960 / TBF 19.5.1).